Reading from the N-terminus, the 164-residue chain is Cytochrome c-type biogenesis protein CcmE (164 aa).

The Cytoplasmic portion of the chain corresponds to 1–8 (MNPRRKSR). Residues 9 to 29 (LYLAMVVLIGISLTTTLVLYA) traverse the membrane as a helical; Signal-anchor for type II membrane protein segment. Topologically, residues 30-164 (LRSNIDLFYT…RGTNTTGNAL (135 aa)) are periplasmic. Histidine 130 and tyrosine 134 together coordinate heme. The segment at 140–164 (EEAMKENHSRPAAAYRGTNTTGNAL) is disordered.

The protein belongs to the CcmE/CycJ family.

Its subcellular location is the cell inner membrane. Its function is as follows. Heme chaperone required for the biogenesis of c-type cytochromes. Transiently binds heme delivered by CcmC and transfers the heme to apo-cytochromes in a process facilitated by CcmF and CcmH. The polypeptide is Cytochrome c-type biogenesis protein CcmE (Yersinia pseudotuberculosis serotype O:3 (strain YPIII)).